We begin with the raw amino-acid sequence, 1285 residues long: ABC-type transporter fsqE (1285 aa).

Residues 54–343 form the ABC transmembrane type-1 1 domain; it reads VSSICAVLAG…IAPSAQALLS (290 aa). 6 consecutive transmembrane segments (helical) span residues 57 to 77, 102 to 122, 176 to 196, 203 to 223, 281 to 301, and 312 to 332; these read ICAV…GLLV, LYYV…TVGF, LAVM…AFIM, IISP…AYMV, VAGM…LAFW, and MSVA…FAII. One can recognise an ABC transporter 1 domain in the interval 380–622; the sequence is LDRVGLIYPS…NGAYAALVQK (243 aa). An ATP-binding site is contributed by 413–420; it reads GSSGSGKS. N467 carries an N-linked (GlcNAc...) asparagine glycan. Residues 627-654 are disordered; that stretch reads DTHDHKAPDGARLSIEDDDDEDSRYGGN. 6 helical membrane passes run 707-727, 753-773, 831-851, 855-875, 931-951, and 968-988; these read LFGL…SVFF, GLYV…EIAL, GILT…AIGW, LVCT…LQVL, ILLA…CAAL, and FQVY…GSIF. One can recognise an ABC transmembrane type-1 2 domain in the interval 713–996; the sequence is AILAGLTIPV…IFTYAPDASK (284 aa). N1037 is a glycosylation site (N-linked (GlcNAc...) asparagine). In terms of domain architecture, ABC transporter 2 spans 1043-1281; it reads VEFEHVSFTY…RGKYWEMVSM (239 aa). An ATP-binding site is contributed by 1078-1085; it reads GQSGSGKS. N1138 carries N-linked (GlcNAc...) asparagine glycosylation.

Belongs to the ABC transporter superfamily. ABCB family. Multidrug resistance exporter (TC 3.A.1.201) subfamily.

The protein localises to the membrane. The protein operates within secondary metabolite biosynthesis. Its function is as follows. ABC-type transporter; part of the gene cluster that mediates the biosynthesis of the isoquinoline alkaloids fumisoquin A, fumisoquin B and fumisoquin C; as well as small amounts of fumipyrrole as a shunt metabolite. The products of the cluster lead to a brown coloration and are important for growth and conidiation. FsqE possibly plays a role of self-protection. The chain is ABC-type transporter fsqE from Aspergillus fumigatus (strain ATCC MYA-4609 / CBS 101355 / FGSC A1100 / Af293) (Neosartorya fumigata).